A 116-amino-acid polypeptide reads, in one-letter code: PTS system galactose-specific EIIA component (116 aa).

The PTS EIIA type-3 domain maps to 11-109; it reads DDYMGVVMGI…AVEVVGQERR (99 aa). His85 acts as the Tele-phosphohistidine intermediate in catalysis. A Phosphohistidine; by HPr modification is found at His85. Asp88 is a Mg(2+) binding site.

As to quaternary structure, homotrimer. Requires Mg(2+) as cofactor.

Functionally, the phosphoenolpyruvate-dependent sugar phosphotransferase system (sugar PTS), a major carbohydrate active transport system, catalyzes the phosphorylation of incoming sugar substrates concomitantly with their translocation across the cell membrane. Involved in galactose transport with PtcB and Lmg_0963. This is PTS system galactose-specific EIIA component from Lactococcus lactis subsp. cremoris (strain MG1363).